Here is a 253-residue protein sequence, read N- to C-terminus: Redox-sensing transcriptional repressor Rex (253 aa).

Positions 26–65 form a DNA-binding region, H-T-H motif; the sequence is LYLRALTALSERSVPTVSSEELATAAGVNSAKLRKDFSYL. 100–105 is a binding site for NAD(+); sequence GIGNLG. The disordered stretch occupies residues 217 to 253; that stretch reads RKAGEDSAAEDEGAPPMRATPASRKGPDGDMPAVMPA.

This sequence belongs to the transcriptional regulatory Rex family. Homodimer.

It localises to the cytoplasm. Functionally, modulates transcription in response to changes in cellular NADH/NAD(+) redox state. This is Redox-sensing transcriptional repressor Rex from Streptomyces griseus subsp. griseus (strain JCM 4626 / CBS 651.72 / NBRC 13350 / KCC S-0626 / ISP 5235).